Here is a 939-residue protein sequence, read N- to C-terminus: cGMP-dependent 3',5'-cyclic phosphodiesterase (939 aa).

A lipid anchor (N-myristoyl glycine) is attached at G2. S-palmitoyl cysteine attachment occurs at residues C5 and C11. The segment at Y16–P38 is disordered. Residue S116 is modified to Phosphoserine. The disordered stretch occupies residues P197–Y217. GAF domains follow at residues A236–G373 and D408–I547. Residues S430, D445, I464, Y487, and T498 each contribute to the 3',5'-cyclic GMP site. One can recognise a PDEase domain in the interval S577 to F901. The active-site Proton donor is H655. H659, H695, D696, and D807 together coordinate Zn(2+). D696 contacts Mg(2+).

The protein belongs to the cyclic nucleotide phosphodiesterase family. PDE2 subfamily. As to quaternary structure, homodimer. Zn(2+) serves as cofactor. Mg(2+) is required as a cofactor. In terms of tissue distribution, expressed in brain and liver (at protein level).

The protein localises to the cytoplasm. It localises to the mitochondrion matrix. It is found in the mitochondrion inner membrane. Its subcellular location is the mitochondrion outer membrane. The protein resides in the cell membrane. It catalyses the reaction a nucleoside 3',5'-cyclic phosphate + H2O = a nucleoside 5'-phosphate + H(+). It carries out the reaction 3',5'-cyclic GMP + H2O = GMP + H(+). The enzyme catalyses 3',5'-cyclic AMP + H2O = AMP + H(+). The 3',5'-cyclic-AMP phosphodiesterase activity is stimulated by 3',5'-cyclic GMP. Specifically inhibited by Bay 60-7550. Its function is as follows. cGMP-activated cyclic nucleotide phosphodiesterase with a dual-specificity for the second messengers cAMP and cGMP, which are key regulators of many important physiological processes. Has a higher efficiency with cGMP compared to cAMP. Plays a role in cell growth and migration. Functionally, regulates mitochondrial cAMP levels and respiration. Involved in the regulation of mitochondria morphology/dynamics and apoptotic cell death via local modulation of cAMP/PKA signaling in the mitochondrion, including the monitoring of local cAMP levels at the outer mitochondrial membrane and of PKA-dependent phosphorylation of DNM1L. This chain is cGMP-dependent 3',5'-cyclic phosphodiesterase, found in Mus musculus (Mouse).